The chain runs to 319 residues: NADH-quinone oxidoreductase subunit H 1 (319 aa).

Transmembrane regions (helical) follow at residues 1-21, 77-97, 107-127, 147-167, 179-199, 214-234, 238-258, 262-282, and 293-313; these read MIGL…LLVV, ILAP…VAFG, VGVL…MLGA, LAYE…AGSL, VWFV…GVAA, LVAG…FLGE, VLLV…GPWL, IWFG…RATL, and FAWK…GIVV.

Belongs to the complex I subunit 1 family. In terms of assembly, NDH-1 is composed of 14 different subunits. Subunits NuoA, H, J, K, L, M, N constitute the membrane sector of the complex.

The protein resides in the cell inner membrane. It catalyses the reaction a quinone + NADH + 5 H(+)(in) = a quinol + NAD(+) + 4 H(+)(out). In terms of biological role, NDH-1 shuttles electrons from NADH, via FMN and iron-sulfur (Fe-S) centers, to quinones in the respiratory chain. The immediate electron acceptor for the enzyme in this species is believed to be ubiquinone. Couples the redox reaction to proton translocation (for every two electrons transferred, four hydrogen ions are translocated across the cytoplasmic membrane), and thus conserves the redox energy in a proton gradient. This subunit may bind ubiquinone. The sequence is that of NADH-quinone oxidoreductase subunit H 1 from Rhodopseudomonas palustris (strain HaA2).